The chain runs to 541 residues: CRISPR-associated exonuclease Cas4/endonuclease Cas1 fusion (541 aa).

The tract at residues 1–179 is CRISPR-associated exonuclease Cas4; it reads MGIHSLLYCE…NCSLAPVCLP (179 aa). Residue C9 participates in [4Fe-4S] cluster binding. Residues D65 and E78 each contribute to the Mn(2+) site. The [4Fe-4S] cluster site is built by C168, C171, and C177. Positions 204–541 are CRISPR-associated endonuclease Cas1; sequence TLHVFGHDSR…ANIFAQARLR (338 aa). Mn(2+)-binding residues include E365, H433, and E448.

In the N-terminal section; belongs to the CRISPR-associated exonuclease Cas4 family. The protein in the C-terminal section; belongs to the CRISPR-associated endonuclease Cas1 family. In terms of assembly, homodimer, forms a heterotetramer with a Cas2 homodimer. It depends on [4Fe-4S] cluster as a cofactor. Requires Mg(2+) as cofactor. Mn(2+) is required as a cofactor.

The enzyme catalyses exonucleolytic cleavage in the 5'- to 3'-direction to yield nucleoside 3'-phosphates.. In terms of biological role, CRISPR (clustered regularly interspaced short palindromic repeat), is an adaptive immune system that provides protection against mobile genetic elements (viruses, transposable elements and conjugative plasmids). CRISPR clusters contain spacers, sequences complementary to antecedent mobile elements, and target invading nucleic acids. CRISPR clusters are transcribed and processed into CRISPR RNA (crRNA). The Cas4 region acts as a ssDNA exonuclease, while the Cas1 region acts as a dsDNA endonuclease. Involved in the integration of spacer DNA into the CRISPR cassette. The protein is CRISPR-associated exonuclease Cas4/endonuclease Cas1 fusion (cas4-cas1) of Leptospira interrogans serogroup Icterohaemorrhagiae serovar Lai (strain 56601).